Here is a 141-residue protein sequence, read N- to C-terminus: Putative antiporter subunit mnhB2 (141 aa).

A run of 4 helical transmembrane segments spans residues 10–30 (TVTKLVVFILLTFGFYVFFAG), 35–55 (GGGFIGGLIFSSAFILMFLAF), 70–90 (ILMIIGALVSSITAIMPTFFG), and 114–134 (ITLFELGILFSVVGVIVTVML).

The protein belongs to the CPA3 antiporters (TC 2.A.63) subunit B family. As to quaternary structure, may form a heterooligomeric complex that consists of seven subunits: mnhA2, mnhB2, mnhC2, mnhD2, mnhE2, mnhF2 and mnhG2.

The protein localises to the cell membrane. This Staphylococcus aureus (strain MRSA252) protein is Putative antiporter subunit mnhB2 (mnhB2).